The chain runs to 115 residues: Large ribosomal subunit protein bL19 (115 aa).

The protein belongs to the bacterial ribosomal protein bL19 family.

Functionally, this protein is located at the 30S-50S ribosomal subunit interface and may play a role in the structure and function of the aminoacyl-tRNA binding site. The polypeptide is Large ribosomal subunit protein bL19 (Aeromonas hydrophila subsp. hydrophila (strain ATCC 7966 / DSM 30187 / BCRC 13018 / CCUG 14551 / JCM 1027 / KCTC 2358 / NCIMB 9240 / NCTC 8049)).